The chain runs to 118 residues: Protein TusC (118 aa).

Belongs to the DsrF/TusC family. As to quaternary structure, heterohexamer, formed by a dimer of trimers. The hexameric TusBCD complex contains 2 copies each of TusB, TusC and TusD. The TusBCD complex interacts with TusE.

Its subcellular location is the cytoplasm. Part of a sulfur-relay system required for 2-thiolation of 5-methylaminomethyl-2-thiouridine (mnm(5)s(2)U) at tRNA wobble positions. This Salmonella agona (strain SL483) protein is Protein TusC.